We begin with the raw amino-acid sequence, 555 residues long: Potassium-transporting ATPase potassium-binding subunit (555 aa).

Transmembrane regions (helical) follow at residues 2–22 (IWVA…PTGI), 60–80 (QYAL…YFIF), 130–150 (IGIT…VMAF), 173–193 (VFLP…VPQT), 246–266 (MSNI…PFTY), 278–298 (ILFV…TTSE), 374–394 (AGFV…GLMV), 412–432 (LIAV…ALAL), 483–503 (LVMF…AASL), and 525–545 (GIFI…MLVL).

The protein belongs to the KdpA family. The system is composed of three essential subunits: KdpA, KdpB and KdpC.

It localises to the cell membrane. Its function is as follows. Part of the high-affinity ATP-driven potassium transport (or Kdp) system, which catalyzes the hydrolysis of ATP coupled with the electrogenic transport of potassium into the cytoplasm. This subunit binds the extracellular potassium ions and delivers the ions to the membrane domain of KdpB through an intramembrane tunnel. The chain is Potassium-transporting ATPase potassium-binding subunit from Bacillus cereus (strain ZK / E33L).